The primary structure comprises 109 residues: Nucleoid-associated protein Bcer98_0019 (109 aa).

It belongs to the YbaB/EbfC family. As to quaternary structure, homodimer.

Its subcellular location is the cytoplasm. It localises to the nucleoid. In terms of biological role, binds to DNA and alters its conformation. May be involved in regulation of gene expression, nucleoid organization and DNA protection. This is Nucleoid-associated protein Bcer98_0019 from Bacillus cytotoxicus (strain DSM 22905 / CIP 110041 / 391-98 / NVH 391-98).